The chain runs to 345 residues: Protein RecA (345 aa).

67–74 (GPESSGKT) serves as a coordination point for ATP.

It belongs to the RecA family.

The protein resides in the cytoplasm. Its function is as follows. Can catalyze the hydrolysis of ATP in the presence of single-stranded DNA, the ATP-dependent uptake of single-stranded DNA by duplex DNA, and the ATP-dependent hybridization of homologous single-stranded DNAs. It interacts with LexA causing its activation and leading to its autocatalytic cleavage. This is Protein RecA from Acidothermus cellulolyticus (strain ATCC 43068 / DSM 8971 / 11B).